We begin with the raw amino-acid sequence, 321 residues long: Aspartate carbamoyltransferase catalytic subunit (321 aa).

Carbamoyl phosphate contacts are provided by arginine 64 and threonine 65. Residue lysine 92 participates in L-aspartate binding. Residues arginine 114, histidine 144, and glutamine 147 each contribute to the carbamoyl phosphate site. L-aspartate contacts are provided by arginine 177 and arginine 232. Positions 273 and 274 each coordinate carbamoyl phosphate.

The protein belongs to the aspartate/ornithine carbamoyltransferase superfamily. ATCase family. As to quaternary structure, heterododecamer (2C3:3R2) of six catalytic PyrB chains organized as two trimers (C3), and six regulatory PyrI chains organized as three dimers (R2).

The enzyme catalyses carbamoyl phosphate + L-aspartate = N-carbamoyl-L-aspartate + phosphate + H(+). It participates in pyrimidine metabolism; UMP biosynthesis via de novo pathway; (S)-dihydroorotate from bicarbonate: step 2/3. Functionally, catalyzes the condensation of carbamoyl phosphate and aspartate to form carbamoyl aspartate and inorganic phosphate, the committed step in the de novo pyrimidine nucleotide biosynthesis pathway. The chain is Aspartate carbamoyltransferase catalytic subunit from Alkalilimnicola ehrlichii (strain ATCC BAA-1101 / DSM 17681 / MLHE-1).